Reading from the N-terminus, the 216-residue chain is LexA repressor (216 aa).

A DNA-binding region (H-T-H motif) is located at residues 29–49 (RAEIAQALGFRSPNAAEDHLK). Catalysis depends on for autocatalytic cleavage activity residues serine 134 and lysine 171.

Belongs to the peptidase S24 family. Homodimer.

It catalyses the reaction Hydrolysis of Ala-|-Gly bond in repressor LexA.. Its function is as follows. Represses a number of genes involved in the response to DNA damage (SOS response), including recA and lexA. In the presence of single-stranded DNA, RecA interacts with LexA causing an autocatalytic cleavage which disrupts the DNA-binding part of LexA, leading to derepression of the SOS regulon and eventually DNA repair. In Bordetella bronchiseptica (strain ATCC BAA-588 / NCTC 13252 / RB50) (Alcaligenes bronchisepticus), this protein is LexA repressor.